A 572-amino-acid polypeptide reads, in one-letter code: Oxygen-dependent choline dehydrogenase (572 aa).

FAD is bound at residue 9-38 (DYVIIGGGSAGSVLGARLSEDKDKNVLVLE). The active-site Proton acceptor is H477.

This sequence belongs to the GMC oxidoreductase family. FAD is required as a cofactor.

It carries out the reaction choline + A = betaine aldehyde + AH2. It catalyses the reaction betaine aldehyde + NAD(+) + H2O = glycine betaine + NADH + 2 H(+). It participates in amine and polyamine biosynthesis; betaine biosynthesis via choline pathway; betaine aldehyde from choline (cytochrome c reductase route): step 1/1. Involved in the biosynthesis of the osmoprotectant glycine betaine. Catalyzes the oxidation of choline to betaine aldehyde and betaine aldehyde to glycine betaine at the same rate. In Staphylococcus epidermidis (strain ATCC 35984 / DSM 28319 / BCRC 17069 / CCUG 31568 / BM 3577 / RP62A), this protein is Oxygen-dependent choline dehydrogenase.